The primary structure comprises 502 residues: MRNTSRVAILIVIVGVLLTLTHDYWGGKLLGIFSVLISCSVVFIAFVISLENRKPAQTIAWLAVLGSFPFLGFLFYLLFGRNYWQQRRFKKKAESDEAVLLKFQEPSPIAIERLPMAPHQRPLLHLAYRIGQHPVSLASQTAVLTNGEETFAAIFDELEKAQHHIHLEYYIVRHDEIGQKLKHVLMEKACQGVHVRFLYDAVGSWKLSNAYIEELRAAGVEMIPFSPVRLPFLSNQINFRNHRKIIVIDGGVGFVGGLNIGDEYLGKDEYFGFWRDTHLLIRGEAVRTLQLIFLQDWYYMTGERLLTPEYLSPPLIVEEGQGGVQLIAGGPDQKWEVIKQLYFAMITSAKRSIWVASPYFVPDEDILTALKVAALSGIDVRLLAPKRPDKKIVFYASRSYFPELLEAGVKIYEYEKGFLHSKVIVVDGELASIGTANMDMRSFHLNFEVNAFLYYTDSTNKLVNDFLEDFRHASPIDYVQFQQRPFRVRIVESVSRLLSPLL.

The next 3 membrane-spanning stretches (helical) occupy residues 7 to 27 (VAIL…YWGG), 29 to 49 (LLGI…FVIS), and 59 to 79 (IAWL…YLLF). PLD phosphodiesterase domains lie at 237–264 (INFR…GDEY) and 415–442 (EKGF…DMRS). Active-site residues include H242, K244, D249, H420, K422, and D427.

The protein belongs to the phospholipase D family. Cardiolipin synthase subfamily.

The protein resides in the cell membrane. The catalysed reaction is 2 a 1,2-diacyl-sn-glycero-3-phospho-(1'-sn-glycerol) = a cardiolipin + glycerol. Catalyzes the reversible phosphatidyl group transfer from one phosphatidylglycerol molecule to another to form cardiolipin (CL) (diphosphatidylglycerol) and glycerol. The protein is Cardiolipin synthase (cls) of Geobacillus thermodenitrificans (strain NG80-2).